Reading from the N-terminus, the 198-residue chain is Elongation factor Ts (198 aa).

Residues 81–84 (TDFV) are involved in Mg(2+) ion dislocation from EF-Tu.

It belongs to the EF-Ts family.

Its subcellular location is the cytoplasm. Functionally, associates with the EF-Tu.GDP complex and induces the exchange of GDP to GTP. It remains bound to the aminoacyl-tRNA.EF-Tu.GTP complex up to the GTP hydrolysis stage on the ribosome. This chain is Elongation factor Ts, found in Herpetosiphon aurantiacus (strain ATCC 23779 / DSM 785 / 114-95).